Consider the following 428-residue polypeptide: CinA-like protein (428 aa).

This sequence belongs to the CinA family.

In Endomicrobium trichonymphae, this protein is CinA-like protein.